Reading from the N-terminus, the 419-residue chain is D-mannonate dehydratase (419 aa).

Substrate-binding residues include asparagine 54 and histidine 139. Tyrosine 176 functions as the Proton donor/acceptor in the catalytic mechanism. Aspartate 227 contacts Mg(2+). Histidine 229 serves as the catalytic Proton donor/acceptor. Mg(2+) is bound by residues glutamate 253 and glutamate 279. Substrate is bound by residues glutamate 279, arginine 300, histidine 329, aspartate 333, and glutamate 356.

Belongs to the mandelate racemase/muconate lactonizing enzyme family. GalD subfamily. Mg(2+) is required as a cofactor.

The catalysed reaction is D-mannonate = 2-dehydro-3-deoxy-D-gluconate + H2O. It participates in carbohydrate metabolism; pentose and glucuronate interconversion. Functionally, catalyzes the dehydration of D-mannonate. Has no detectable activity with a panel of 70 other acid sugars (in vitro). In Xanthomonas oryzae pv. oryzicola (strain BLS256), this protein is D-mannonate dehydratase.